We begin with the raw amino-acid sequence, 213 residues long: A-type ATP synthase subunit D (213 aa).

It belongs to the V-ATPase D subunit family. Has multiple subunits with at least A(3), B(3), C, D, E, F, H, I and proteolipid K(x).

Its subcellular location is the cell membrane. In terms of biological role, component of the A-type ATP synthase that produces ATP from ADP in the presence of a proton gradient across the membrane. The sequence is that of A-type ATP synthase subunit D from Saccharolobus solfataricus (strain ATCC 35092 / DSM 1617 / JCM 11322 / P2) (Sulfolobus solfataricus).